Consider the following 150-residue polypeptide: Ribonuclease H (150 aa).

Residues 1-141 (MKSIEVHTDG…VDVLARNQAI (141 aa)) form the RNase H type-1 domain. Mg(2+) is bound by residues aspartate 9, glutamate 47, aspartate 69, and aspartate 133.

It belongs to the RNase H family. As to quaternary structure, monomer. Requires Mg(2+) as cofactor.

It is found in the cytoplasm. The catalysed reaction is Endonucleolytic cleavage to 5'-phosphomonoester.. Its function is as follows. Endonuclease that specifically degrades the RNA of RNA-DNA hybrids. This Xanthomonas campestris pv. campestris (strain 8004) protein is Ribonuclease H.